The primary structure comprises 310 residues: Lipoyl synthase (310 aa).

Cysteine 41, cysteine 46, cysteine 52, cysteine 68, cysteine 72, cysteine 75, and serine 281 together coordinate [4Fe-4S] cluster. The Radical SAM core domain maps to 54–270 (GERRTATFMI…RKVAMEKGFK (217 aa)). Residues 285-310 (DEQVNEAAKERQRIGDEKLEAAKNEA) form a disordered region.

This sequence belongs to the radical SAM superfamily. Lipoyl synthase family. Requires [4Fe-4S] cluster as cofactor.

It is found in the cytoplasm. The enzyme catalyses [[Fe-S] cluster scaffold protein carrying a second [4Fe-4S](2+) cluster] + N(6)-octanoyl-L-lysyl-[protein] + 2 oxidized [2Fe-2S]-[ferredoxin] + 2 S-adenosyl-L-methionine + 4 H(+) = [[Fe-S] cluster scaffold protein] + N(6)-[(R)-dihydrolipoyl]-L-lysyl-[protein] + 4 Fe(3+) + 2 hydrogen sulfide + 2 5'-deoxyadenosine + 2 L-methionine + 2 reduced [2Fe-2S]-[ferredoxin]. Its pathway is protein modification; protein lipoylation via endogenous pathway; protein N(6)-(lipoyl)lysine from octanoyl-[acyl-carrier-protein]. Catalyzes the radical-mediated insertion of two sulfur atoms into the C-6 and C-8 positions of the octanoyl moiety bound to the lipoyl domains of lipoate-dependent enzymes, thereby converting the octanoylated domains into lipoylated derivatives. In Staphylococcus carnosus (strain TM300), this protein is Lipoyl synthase.